The sequence spans 379 residues: Anhydro-N-acetylmuramic acid kinase (379 aa).

9–16 (GTSADGVD) lines the ATP pocket.

Belongs to the anhydro-N-acetylmuramic acid kinase family.

It catalyses the reaction 1,6-anhydro-N-acetyl-beta-muramate + ATP + H2O = N-acetyl-D-muramate 6-phosphate + ADP + H(+). It functions in the pathway amino-sugar metabolism; 1,6-anhydro-N-acetylmuramate degradation. The protein operates within cell wall biogenesis; peptidoglycan recycling. Functionally, catalyzes the specific phosphorylation of 1,6-anhydro-N-acetylmuramic acid (anhMurNAc) with the simultaneous cleavage of the 1,6-anhydro ring, generating MurNAc-6-P. Is required for the utilization of anhMurNAc either imported from the medium or derived from its own cell wall murein, and thus plays a role in cell wall recycling. The protein is Anhydro-N-acetylmuramic acid kinase of Prochlorococcus marinus (strain MIT 9303).